The sequence spans 350 residues: Ketol-acid reductoisomerase (NADP(+)) (350 aa).

A KARI N-terminal Rossmann domain is found at 4-187; it reads VSITTDYSRM…GGARANIIKT (184 aa). Residues 30–33, arginine 53, threonine 58, and 88–91 each bind NADP(+); these read YGSQ and DMVQ. Histidine 113 is an active-site residue. Glycine 139 provides a ligand contact to NADP(+). The KARI C-terminal knotted domain occupies 188–333; that stretch reads TFKEETETDL…KQLRAKMVWL (146 aa). Aspartate 196, glutamate 200, glutamate 232, and glutamate 236 together coordinate Mg(2+). Serine 257 serves as a coordination point for substrate.

The protein belongs to the ketol-acid reductoisomerase family. The cofactor is Mg(2+).

The enzyme catalyses (2R)-2,3-dihydroxy-3-methylbutanoate + NADP(+) = (2S)-2-acetolactate + NADPH + H(+). The catalysed reaction is (2R,3R)-2,3-dihydroxy-3-methylpentanoate + NADP(+) = (S)-2-ethyl-2-hydroxy-3-oxobutanoate + NADPH + H(+). The protein operates within amino-acid biosynthesis; L-isoleucine biosynthesis; L-isoleucine from 2-oxobutanoate: step 2/4. It functions in the pathway amino-acid biosynthesis; L-valine biosynthesis; L-valine from pyruvate: step 2/4. Involved in the biosynthesis of branched-chain amino acids (BCAA). Catalyzes an alkyl-migration followed by a ketol-acid reduction of (S)-2-acetolactate (S2AL) to yield (R)-2,3-dihydroxy-isovalerate. In the isomerase reaction, S2AL is rearranged via a Mg-dependent methyl migration to produce 3-hydroxy-3-methyl-2-ketobutyrate (HMKB). In the reductase reaction, this 2-ketoacid undergoes a metal-dependent reduction by NADPH to yield (R)-2,3-dihydroxy-isovalerate. The protein is Ketol-acid reductoisomerase (NADP(+)) of Xylella fastidiosa (strain 9a5c).